Reading from the N-terminus, the 396-residue chain is Elongation factor Tu (396 aa).

One can recognise a tr-type G domain in the interval 10 to 206; that stretch reads KPHVNIGTIG…AVDESVPDPI (197 aa). Positions 19-26 are G1; the sequence is GHVDHGKT. Residue 19 to 26 participates in GTP binding; that stretch reads GHVDHGKT. Thr-26 is a Mg(2+) binding site. The segment at 62-66 is G2; it reads GITIN. A G3 region spans residues 83–86; sequence DAPG. Residues 83–87 and 138–141 contribute to the GTP site; these read DAPGH and NKSD. Positions 138-141 are G4; sequence NKSD. The G5 stretch occupies residues 176–178; that stretch reads SGL.

This sequence belongs to the TRAFAC class translation factor GTPase superfamily. Classic translation factor GTPase family. EF-Tu/EF-1A subfamily. Monomer.

The protein localises to the cytoplasm. It carries out the reaction GTP + H2O = GDP + phosphate + H(+). In terms of biological role, GTP hydrolase that promotes the GTP-dependent binding of aminoacyl-tRNA to the A-site of ribosomes during protein biosynthesis. This chain is Elongation factor Tu, found in Renibacterium salmoninarum (strain ATCC 33209 / DSM 20767 / JCM 11484 / NBRC 15589 / NCIMB 2235).